The primary structure comprises 445 residues: Cyclic GMP-AMP phosphodiesterase SMPDL3A (445 aa).

Positions 1–22 (MALPGNFLCCLLVAWLCDPGLG) are cleaved as a signal peptide. Residues D42 and H44 each contribute to the Zn(2+) site. Residues C59 and C78 are joined by a disulfide bond. A glycan (N-linked (GlcNAc...) asparagine) is linked at N66. D107 contacts Zn(2+). Residue H111 participates in ATP binding. N128 is a glycosylation site (N-linked (GlcNAc...) asparagine). Residue N148 coordinates Zn(2+). 2 residues coordinate ATP: N148 and H149. 2 N-linked (GlcNAc...) asparagine glycosylation sites follow: N219 and N235. Residues H249, H290, and H292 each coordinate Zn(2+). N353 and N364 each carry an N-linked (GlcNAc...) asparagine glycan. 2 disulfide bridges follow: C417/C421 and C427/C440.

This sequence belongs to the acid sphingomyelinase family. Monomer. Homodimer; homodimerizes following 2',3'-cGAMP-binding. Zn(2+) is required as a cofactor.

The protein resides in the secreted. The enzyme catalyses 2',3'-cGAMP + H2O = 5'-pGpA(2'-5') + H(+). The catalysed reaction is 5'-pGpA(2'-5') + H2O = 5'-GpA(2'-5') + phosphate. It catalyses the reaction a ribonucleoside 5'-triphosphate + H2O = a ribonucleoside 5'-diphosphate + phosphate + H(+). It carries out the reaction ATP + H2O = ADP + phosphate + H(+). Cyclic-nucleotide phosphodiesterase that acts as a negative regulator of innate immunity by mediating degradation of 2',3'-cGAMP, thereby inhibiting the cGAS-STING signaling. Specifically linearizes 2',3'-cGAMP into 2'5'-bond pGpA and further hydrolyzes pGpA to produce GpA. Also has in vitro nucleotide phosphodiesterase activity with nucleoside triphosphates, such as ATP. Has in vitro activity with p-nitrophenyl-TMP. Has lower activity with nucleoside diphosphates, and no activity with nucleoside monophosphates. Has in vitro activity with CDP-choline, giving rise to CMP and phosphocholine. Has in vitro activity with CDP-ethanolamine. Does not have sphingomyelin phosphodiesterase activity. The sequence is that of Cyclic GMP-AMP phosphodiesterase SMPDL3A (Smpdl3a) from Rattus norvegicus (Rat).